Reading from the N-terminus, the 1021-residue chain is Sodium/potassium-transporting ATPase subunit alpha-1 (1021 aa).

Residues 1–5 constitute a propeptide that is removed on maturation; that stretch reads MGKGA. The span at 1 to 11 shows a compositional bias: basic and acidic residues; sequence MGKGAGRDKYE. Residues 1–31 form a disordered region; sequence MGKGAGRDKYEPTATSEHGTKKKKAKERDMD. Residues 6 to 85 lie on the Cytoplasmic side of the membrane; the sequence is GRDKYEPTAT…NTLTPPPTTP (80 aa). A Phosphotyrosine modification is found at Tyr-10. Ser-16 carries the post-translational modification Phosphoserine; by PKC. A phosphoinositide-3 kinase binding region spans residues 80–82; sequence PPP. The helical transmembrane segment at 86 to 106 threads the bilayer; the sequence is EWVKFCRQLFGGFSLLLWIGS. Topologically, residues 107–129 are extracellular; it reads LLCFLAYGITSVMEGEPNSDNLY. Residues 130-150 traverse the membrane as a helical segment; that stretch reads LGVVLAAVVIITGCFSYYQEA. The Cytoplasmic portion of the chain corresponds to 151-286; it reads KSSKIMESFK…GGKTPIAMEI (136 aa). The tract at residues 214–233 is disordered; the sequence is SSLTGESEPQTRSPDFSNEN. The helical transmembrane segment at 287-306 threads the bilayer; sequence EHFIHLITGVAVFLGVSFFI. Residues 307–318 lie on the Extracellular side of the membrane; sequence LSLILEYTWLEA. The helical transmembrane segment at 319 to 336 threads the bilayer; that stretch reads VIFLIGIIVANVPEGLLA. The Cytoplasmic segment spans residues 337–770; the sequence is TVTVCLTLTA…EEGRLIFDNL (434 aa). Asp-374 (4-aspartylphosphate intermediate) is an active-site residue. Lys-485 contributes to the ATP binding site. Mg(2+)-binding residues include Asp-715 and Asp-719. Residues 771–790 form a helical membrane-spanning segment; sequence KKSIAYTLTSNIPEITPFLI. Topologically, residues 791-800 are extracellular; that stretch reads FIIANIPLPL. The chain crosses the membrane as a helical span at residues 801–821; the sequence is GTCTILCIDLGTDMVPAISLA. At 822-841 the chain is on the cytoplasmic side; that stretch reads YEQAESDIMKRQPRNPKTDK. The helical transmembrane segment at 842–864 threads the bilayer; it reads LVNERLISMAYGQIGMIQALGGF. At 865–916 the chain is on the extracellular side; it reads FTYFVIMAENGFLPSGLVGIRLQWDDRWINDVEDSYGQQWTFEQRKIVEFTC. The chain crosses the membrane as a helical span at residues 917-936; it reads HTAFFVSIVVVQWADLIICK. Topologically, residues 937 to 949 are cytoplasmic; sequence TRRNSVFQQGMKN. Position 941 is a phosphoserine; by PKA (Ser-941). Residues 950–968 traverse the membrane as a helical segment; the sequence is KILIFGLFEETALAAFLSY. The Extracellular portion of the chain corresponds to 969-983; the sequence is CPGMDVALRMYPLKP. A helical transmembrane segment spans residues 984–1004; sequence TWWFCAFPYSLLIFLYDEIRK. Residues 1005–1021 are Cytoplasmic-facing; that stretch reads LIIRRNPGGWVERETYY.

The protein belongs to the cation transport ATPase (P-type) (TC 3.A.3) family. Type IIC subfamily. As to quaternary structure, the sodium/potassium-transporting ATPase is composed of a catalytic alpha subunit, an auxiliary non-catalytic beta subunit and an additional regulatory subunit. Phosphorylation on Tyr-10 modulates pumping activity.

Its subcellular location is the cell membrane. It localises to the sarcolemma. It catalyses the reaction K(+)(out) + Na(+)(in) + ATP + H2O = K(+)(in) + Na(+)(out) + ADP + phosphate + H(+). This is the catalytic component of the active enzyme, which catalyzes the hydrolysis of ATP coupled with the exchange of sodium and potassium ions across the plasma membrane. This action creates the electrochemical gradient of sodium and potassium ions, providing the energy for active transport of various nutrients. This is Sodium/potassium-transporting ATPase subunit alpha-1 (ATP1A1) from Gallus gallus (Chicken).